A 509-amino-acid chain; its full sequence is Heat shock 70 kDa protein 14-A (509 aa).

Belongs to the heat shock protein 70 family. Component of ribosome-associated complex (RAC).

It localises to the cytoplasm. It is found in the cytosol. Its function is as follows. Component of the ribosome-associated complex (RAC), a complex involved in folding or maintaining nascent polypeptides in a folding-competent state. The protein is Heat shock 70 kDa protein 14-A (hspa14-a) of Xenopus laevis (African clawed frog).